The sequence spans 729 residues: Triadin (729 aa).

Residues 1 to 28 (MTEITAEGNASTTTTVIDSKNGSVPKSP) are disordered. Residues 1 to 47 (MTEITAEGNASTTTTVIDSKNGSVPKSPGKVLKRTVTEDIVTTFSSP) lie on the Cytoplasmic side of the membrane. Polar residues predominate over residues 8-24 (GNASTTTTVIDSKNGSV). Residues 48 to 68 (AAWLLVIALIITWSAVAIVMF) form a helical membrane-spanning segment. Topologically, residues 69–729 (DLVDYKNFSA…NSPGQKQQGQ (661 aa)) are lumenal. A glycan (N-linked (GlcNAc...) asparagine) is linked at Asn-75. The span at 117-129 (EDEEDDDGDEDTD) shows a compositional bias: acidic residues. 3 disordered regions span residues 117–265 (EDEE…EQKD), 281–682 (DLKP…PTKQ), and 705–729 (PFTP…QQGQ). 8 stretches are compositionally biased toward basic and acidic residues: residues 130–265 (KGEI…EQKD), 309–357 (LEEK…KASE), 371–433 (AKKD…KEEI), 444–509 (GKKE…EVKP), 516–531 (GKKE…KEAK), 538–562 (VQIH…EKVL), 580–598 (KKAE…DKPK), and 609–674 (ESGK…KEGT). Residue Asn-647 is glycosylated (N-linked (GlcNAc...) asparagine). Positions 715-729 (SSGQANSPGQKQQGQ) are enriched in polar residues.

In terms of assembly, homooligomer of variable subunit number; disulfide-linked. Interacts with CASQ1 and RYR1 in skeletal muscle. Interacts with CASQ2. In terms of processing, phosphorylated by CaMK2. N-glycosylated.

The protein resides in the cell membrane. It is found in the sarcoplasmic reticulum membrane. Its function is as follows. Contributes to the regulation of lumenal Ca2+ release via the sarcoplasmic reticulum calcium release channels RYR1 and RYR2, a key step in triggering skeletal and heart muscle contraction. Required for normal organization of the triad junction, where T-tubules and the sarcoplasmic reticulum terminal cisternae are in close contact. Required for normal skeletal muscle strength. Plays a role in excitation-contraction coupling in the heart and in regulating the rate of heart beats. The chain is Triadin (TRDN) from Homo sapiens (Human).